Consider the following 147-residue polypeptide: Phosphoribosyl-AMP cyclohydrolase (147 aa).

Residue aspartate 89 participates in Mg(2+) binding. Residue cysteine 90 coordinates Zn(2+). Residues aspartate 91 and aspartate 93 each coordinate Mg(2+). Zn(2+)-binding residues include cysteine 106 and cysteine 113.

The protein belongs to the PRA-CH family. As to quaternary structure, homodimer. The cofactor is Mg(2+). It depends on Zn(2+) as a cofactor.

It is found in the cytoplasm. The catalysed reaction is 1-(5-phospho-beta-D-ribosyl)-5'-AMP + H2O = 1-(5-phospho-beta-D-ribosyl)-5-[(5-phospho-beta-D-ribosylamino)methylideneamino]imidazole-4-carboxamide. It participates in amino-acid biosynthesis; L-histidine biosynthesis; L-histidine from 5-phospho-alpha-D-ribose 1-diphosphate: step 3/9. In terms of biological role, catalyzes the hydrolysis of the adenine ring of phosphoribosyl-AMP. This chain is Phosphoribosyl-AMP cyclohydrolase, found in Nitrobacter hamburgensis (strain DSM 10229 / NCIMB 13809 / X14).